The chain runs to 123 residues: Large ribosomal subunit protein bL17 (123 aa).

This sequence belongs to the bacterial ribosomal protein bL17 family. As to quaternary structure, part of the 50S ribosomal subunit. Contacts protein L32.

In Mycoplasma genitalium (strain ATCC 33530 / DSM 19775 / NCTC 10195 / G37) (Mycoplasmoides genitalium), this protein is Large ribosomal subunit protein bL17.